The primary structure comprises 94 residues: Pyrimidine/purine nucleoside phosphorylase (94 aa).

Belongs to the nucleoside phosphorylase PpnP family.

The catalysed reaction is a purine D-ribonucleoside + phosphate = a purine nucleobase + alpha-D-ribose 1-phosphate. The enzyme catalyses adenosine + phosphate = alpha-D-ribose 1-phosphate + adenine. It carries out the reaction cytidine + phosphate = cytosine + alpha-D-ribose 1-phosphate. It catalyses the reaction guanosine + phosphate = alpha-D-ribose 1-phosphate + guanine. The catalysed reaction is inosine + phosphate = alpha-D-ribose 1-phosphate + hypoxanthine. The enzyme catalyses thymidine + phosphate = 2-deoxy-alpha-D-ribose 1-phosphate + thymine. It carries out the reaction uridine + phosphate = alpha-D-ribose 1-phosphate + uracil. It catalyses the reaction xanthosine + phosphate = alpha-D-ribose 1-phosphate + xanthine. Catalyzes the phosphorolysis of diverse nucleosides, yielding D-ribose 1-phosphate and the respective free bases. Can use uridine, adenosine, guanosine, cytidine, thymidine, inosine and xanthosine as substrates. Also catalyzes the reverse reactions. In Klebsiella pneumoniae (strain 342), this protein is Pyrimidine/purine nucleoside phosphorylase.